A 495-amino-acid chain; its full sequence is Tripartite motif-containing protein 5 (495 aa).

A2 bears the N-acetylalanine mark. The RING-type zinc-finger motif lies at 15–60 (CPICLELLTEPLSLHCGHSFCQACITANHKKSMLYKEGERSCPVCR). S87 carries the post-translational modification Phosphoserine. The B box-type zinc-finger motif lies at 92 to 133 (QKVDHCARHGEKLLLFCQEDSKVICWLCERSQEHRGHHTFLM). 4 residues coordinate Zn(2+): C97, H100, C119, and H125. The stretch at 137–223 (AQEYHVKLQT…KSLTKSETKM (87 aa)) forms a coiled coil. Positions 187–200 (FEQLREILDREESN) are required for interaction with GABARAP and for autophagy. One can recognise a B30.2/SPRY domain in the interval 283–495 (LKGMLDMFRE…VPMTLCSPSS (213 aa)).

Belongs to the TRIM/RBCC family. Can form homodimers and homotrimers. In addition to lower-order dimerization, also exhibits a higher-order multimerization and both low- and high-order multimerizations are essential for its restriction activity. Interacts with BTBD1 and BTBD2. Interacts with PSMC4, PSMC5, PSMD7 and HSPA8/HSC70. Interacts (via B30.2/SPRY domain) with HSPA1A/B. Interacts with PSMC2, MAP3K7/TAK1, TAB2 and TAB3. Interacts with SQSTM1. Interacts with TRIM6 and TRIM34. Interacts with ULK1 (phosphorylated form), GABARAP, GABARAPL1, GABARAPL2, MAP1LC3A, MAP1LC3C and BECN1. Post-translationally, degraded in a proteasome-independent fashion in the absence of viral infection but in a proteasome-dependent fashion following exposure to restriction sensitive virus. In terms of processing, autoubiquitinated in a RING finger- and UBE2D2-dependent manner. Monoubiquitinated by TRIM21. Deubiquitinated by Yersinia YopJ. Ubiquitination may not lead to proteasomal degradation.

It is found in the cytoplasm. The protein resides in the nucleus. The enzyme catalyses S-ubiquitinyl-[E2 ubiquitin-conjugating enzyme]-L-cysteine + [acceptor protein]-L-lysine = [E2 ubiquitin-conjugating enzyme]-L-cysteine + N(6)-ubiquitinyl-[acceptor protein]-L-lysine.. It functions in the pathway protein modification; protein ubiquitination. Functionally, capsid-specific restriction factor that prevents infection from non-host-adapted retroviruses. Blocks viral replication early in the life cycle, after viral entry but before reverse transcription. In addition to acting as a capsid-specific restriction factor, also acts as a pattern recognition receptor that activates innate immune signaling in response to the retroviral capsid lattice. Binding to the viral capsid triggers its E3 ubiquitin ligase activity, and in concert with the heterodimeric ubiquitin conjugating enzyme complex UBE2V1-UBE2N (also known as UBC13-UEV1A complex) generates 'Lys-63'-linked polyubiquitin chains, which in turn are catalysts in the autophosphorylation of the MAP3K7/TAK1 complex (includes TAK1, TAB2, and TAB3). Activation of the MAP3K7/TAK1 complex by autophosphorylation results in the induction and expression of NF-kappa-B and MAPK-responsive inflammatory genes, thereby leading to an innate immune response in the infected cell. Plays a role in regulating autophagy through activation of autophagy regulator BECN1 by causing its dissociation from its inhibitors BCL2 and TAB2. The chain is Tripartite motif-containing protein 5 (TRIM5) from Macaca nemestrina (Pig-tailed macaque).